The primary structure comprises 268 residues: MVNVVVTGAAGRMGTQIVRLVAAAEGLKLTGAVERPGHAGQDAGALAGIPPLGVAVVDDLAGALAGADVVIDFTSHEASARNAELCAEKGVALVIGSTGFTPEAKARVAAAAARIPVVFSPNMSVGVNVLFELVRQAAKVLGDAYDVEIVEIHHKRKRDAPSGTAVALGEVAAGALGRDPADALAYTRHGILGERPPWQIGVQTLRGGDVVGEHTVYFCGEGERLELTHRATSREQFARGAVRAAGFIAGKPAGLYDMADVLGLRSAR.

NAD(+)-binding positions include 8–13 (GAAGRM) and glutamate 34. Arginine 35 contributes to the NADP(+) binding site. Residues 96-98 (GST) and 120-123 (SPNM) each bind NAD(+). The Proton donor/acceptor role is filled by histidine 153. (S)-2,3,4,5-tetrahydrodipicolinate is bound at residue histidine 154. The active-site Proton donor is lysine 157. 163 to 164 (GT) contributes to the (S)-2,3,4,5-tetrahydrodipicolinate binding site.

The protein belongs to the DapB family.

The protein localises to the cytoplasm. The enzyme catalyses (S)-2,3,4,5-tetrahydrodipicolinate + NAD(+) + H2O = (2S,4S)-4-hydroxy-2,3,4,5-tetrahydrodipicolinate + NADH + H(+). It catalyses the reaction (S)-2,3,4,5-tetrahydrodipicolinate + NADP(+) + H2O = (2S,4S)-4-hydroxy-2,3,4,5-tetrahydrodipicolinate + NADPH + H(+). It participates in amino-acid biosynthesis; L-lysine biosynthesis via DAP pathway; (S)-tetrahydrodipicolinate from L-aspartate: step 4/4. Catalyzes the conversion of 4-hydroxy-tetrahydrodipicolinate (HTPA) to tetrahydrodipicolinate. The protein is 4-hydroxy-tetrahydrodipicolinate reductase of Anaeromyxobacter sp. (strain Fw109-5).